Reading from the N-terminus, the 461-residue chain is Nuclear distribution protein PAC1 (461 aa).

The 33-residue stretch at 9 to 41 (QAEELHKAIIAYLSANNLSSSATALRTELGLAE) folds into the LisH domain. Residues 61–88 (TSVVRLQKKIMDLESRNNALQSELDNAT) adopt a coiled-coil conformation. WD repeat units follow at residues 114–155 (SHQN…RTIK), 157–197 (HTRP…KNIR), 201–248 (GHDH…CLKT), 251–290 (GHTA…PENR), 295–355 (GHDH…LKTL), 357–396 (GHDN…KCVK), 401–444 (VHER…VRIR), and 446–461 (VIAT…IFAN).

The protein belongs to the WD repeat LIS1/nudF family. In terms of assembly, self-associates. Interacts with NDL1 and dynein.

The protein resides in the cytoplasm. The protein localises to the cytoskeleton. It is found in the spindle pole. Functionally, positively regulates the activity of the minus-end directed microtubule motor protein dynein. May enhance dynein-mediated microtubule sliding by targeting dynein to the microtubule plus end. Required for nuclear migration during vegetative growth as well as development. Required for retrograde early endosome (EE) transport from the hyphal tip. Required for localization of dynein to the mitotic spindle poles. Recruits additional proteins to the dynein complex at SPBs. The sequence is that of Nuclear distribution protein PAC1 from Pyricularia oryzae (strain 70-15 / ATCC MYA-4617 / FGSC 8958) (Rice blast fungus).